A 440-amino-acid polypeptide reads, in one-letter code: Probable exopolygalacturonase C (440 aa).

Positions 1–21 are cleaved as a signal peptide; that stretch reads MLITNPALLGILASLVPLALG. Residues N84 and N151 are each glycosylated (N-linked (GlcNAc...) asparagine). PbH1 repeat units follow at residues 188–210, 217–238, and 240–261; these read GDDI…PFNT, GTNI…AVNT, and SHNI…SIGS. N-linked (GlcNAc...) asparagine glycosylation occurs at N219. The Proton donor role is filled by D231. The active site involves H255. Residue N271 is glycosylated (N-linked (GlcNAc...) asparagine). The stretch at 272–293 is one PbH1 4 repeat; the sequence is ITNLRFEDVTVIDALYAARFKS. Residue N313 is glycosylated (N-linked (GlcNAc...) asparagine). Cysteines 389 and 395 form a disulfide. N434 carries an N-linked (GlcNAc...) asparagine glycan.

This sequence belongs to the glycosyl hydrolase 28 family.

The protein localises to the secreted. The enzyme catalyses [(1-&gt;4)-alpha-D-galacturonosyl](n) + H2O = alpha-D-galacturonate + [(1-&gt;4)-alpha-D-galacturonosyl](n-1). Specific in hydrolyzing the terminal glycosidic bond of polygalacturonic acid and oligogalacturonates. The sequence is that of Probable exopolygalacturonase C (pgxC) from Aspergillus fumigatus (strain CBS 144.89 / FGSC A1163 / CEA10) (Neosartorya fumigata).